The following is a 209-amino-acid chain: Large ribosomal subunit protein uL3 (209 aa).

This sequence belongs to the universal ribosomal protein uL3 family. Part of the 50S ribosomal subunit. Forms a cluster with proteins L14 and L19.

In terms of biological role, one of the primary rRNA binding proteins, it binds directly near the 3'-end of the 23S rRNA, where it nucleates assembly of the 50S subunit. The sequence is that of Large ribosomal subunit protein uL3 from Nitratidesulfovibrio vulgaris (strain ATCC 29579 / DSM 644 / CCUG 34227 / NCIMB 8303 / VKM B-1760 / Hildenborough) (Desulfovibrio vulgaris).